The sequence spans 245 residues: Orotidine 5'-phosphate decarboxylase (245 aa).

Substrate is bound by residues Asp-22, Lys-44, 71 to 80 (DLKFHDIPNT), Thr-131, Arg-192, Gln-201, Gly-221, and Arg-222. Lys-73 (proton donor) is an active-site residue.

This sequence belongs to the OMP decarboxylase family. Type 1 subfamily. In terms of assembly, homodimer.

The catalysed reaction is orotidine 5'-phosphate + H(+) = UMP + CO2. Its pathway is pyrimidine metabolism; UMP biosynthesis via de novo pathway; UMP from orotate: step 2/2. Functionally, catalyzes the decarboxylation of orotidine 5'-monophosphate (OMP) to uridine 5'-monophosphate (UMP). This is Orotidine 5'-phosphate decarboxylase from Salmonella choleraesuis (strain SC-B67).